Reading from the N-terminus, the 472-residue chain is P2X purinoceptor 2 (472 aa).

Over 1–34 the chain is Cytoplasmic; it reads MVRRLARGCWSAFWDYETPKVIVVRNRRLGFVHR. 6 cysteine pairs are disulfide-bonded: Cys-9–Cys-430, Cys-113–Cys-164, Cys-124–Cys-147, Cys-130–Cys-158, Cys-214–Cys-224, and Cys-258–Cys-267. Residues 35–52 form a helical membrane-spanning segment; that stretch reads MVQLLILLYFVWYVFIVQ. Over 53-326 the chain is Extracellular; sequence KSYQDSETGP…IVHGQAGKFS (274 aa). The ATP site is built by Lys-69 and Lys-71. N-linked (GlcNAc...) asparagine glycosylation occurs at Asn-182. Thr-184 serves as a coordination point for ATP. Asn-239 carries N-linked (GlcNAc...) asparagine glycosylation. ATP-binding residues include Ser-284, Asn-288, and Arg-290. N-linked (GlcNAc...) asparagine glycosylation is present at Asn-298. An ATP-binding site is contributed by Lys-308. Positions 309-322 are pore-forming motif; the sequence is AYGIRIDVIVHGQA. The chain crosses the membrane as a helical span at residues 327-347; the sequence is LIPTIINLATALTSIGVGSFL. Residues 348–472 are Cytoplasmic-facing; the sequence is CDWILLTFMN…STDPKGLAQL (125 aa). The tract at residues 393–472 is disordered; the sequence is PPPSHYSQDQ…STDPKGLAQL (80 aa). Polar residues predominate over residues 456 to 465; it reads PSQQDSTSTD.

This sequence belongs to the P2X receptor family. As to quaternary structure, homotrimer and heterotrimer; functional P2XRs are organized as homomeric and heteromeric trimers. Homotrimer. Forms heterotrimer with P2RX1. Forms heterotrimer with P2RX6. Forms heterotrimer with P2RX3. As to expression, high levels in pituitary and vas deferens. Lower extent in spinal cord, bladder, brain, adrenal, testis, sensory epithelia from the inner ear.

It is found in the cell membrane. The catalysed reaction is Ca(2+)(in) = Ca(2+)(out). The enzyme catalyses K(+)(in) = K(+)(out). It catalyses the reaction Na(+)(in) = Na(+)(out). With respect to regulation, fast activation by external ATP. Exhibits slow desensitization during prolonged ATP activation. Not sensitive to the ATP agonist:alpha/beta-methylene-ATP. ATP-gated nonselective transmembrane cation channel permeable to potassium, sodium and calcium. Activation by extracellular ATP induces a variety of cellular responses, such as excitatory postsynaptic responses in sensory neurons, neuromuscular junctions (NMJ) formation, hearing, perception of taste and peristalsis. In the inner ear, regulates sound transduction and auditory neurotransmission, outer hair cell electromotility, inner ear gap junctions, and K(+) recycling. Mediates synaptic transmission between neurons and from neurons to smooth muscle. The chain is P2X purinoceptor 2 (P2rx2) from Rattus norvegicus (Rat).